The primary structure comprises 418 residues: Sonic hedgehog protein (418 aa).

The first 23 residues, 1 to 23, serve as a signal peptide directing secretion; the sequence is MRLLTRVLLVSLLTLSLVVSGLA. Residue Cys-24 is the site of N-palmitoyl cysteine attachment. The short motif at 32-38 is the Cardin-Weintraub element; that stretch reads RRRHPKK. Positions 89, 90, 95, 125, 126, 129, and 131 each coordinate Ca(2+). His-140, Asp-147, and His-182 together coordinate Zn(2+). Gly-197 carries the Cholesterol glycine ester lipid modification.

The protein belongs to the hedgehog family. Interacts with HHATL/GUP1 which negatively regulates HHAT-mediated palmitoylation of the SHH N-terminus. Interacts with BOC and CDON. Interacts with HHIP. Interacts with DISP1 via its cholesterol anchor. Interacts with SCUBE2. As to quaternary structure, multimer. In terms of processing, the C-terminal domain displays an autoproteolysis activity and a cholesterol transferase activity. Both activities result in the cleavage of the full-length protein and covalent attachment of a cholesterol moiety to the C-terminal of the newly generated N-terminal fragment (ShhN). Cholesterylation is required for the sonic hedgehog protein N-product targeting to lipid rafts and multimerization. ShhN is the active species in both local and long-range signaling, whereas the C-product (ShhC) is degraded in the reticulum endoplasmic. N-palmitoylation by HHAT of ShhN is required for sonic hedgehog protein N-product multimerization and full activity. It is a prerequisite for the membrane-proximal positioning and the subsequent shedding of this N-terminal peptide. Post-translationally, the lipidated N- and C-terminal peptides of ShhNp can be cleaved (shedding). The N-terminal palmitoylated peptide is cleaved at the Cardin-Weintraub (CW) motif site. The cleavage reduced the interactions with heparan sulfate. The cleavage is enhanced by SCUBE2. In terms of tissue distribution, expressed in the ventral midline of the neural tube and brain. Also found in the notochord and in developing fin bud. In the developing brain, expression occurs in domains that include a discrete region in the floor of the diencephalon.

The protein resides in the endoplasmic reticulum membrane. It localises to the golgi apparatus membrane. It is found in the cell membrane. The catalysed reaction is glycyl-L-cysteinyl-[protein] + cholesterol + H(+) = [protein]-C-terminal glycyl cholesterol ester + N-terminal L-cysteinyl-[protein]. The C-terminal part of the sonic hedgehog protein precursor displays an autoproteolysis and a cholesterol transferase activity. Both activities result in the cleavage of the full-length protein into two parts (ShhN and ShhC) followed by the covalent attachment of a cholesterol moiety to the C-terminal of the newly generated ShhN. Both activities occur in the endoplasmic reticulum. Once cleaved, ShhC is degraded in the endoplasmic reticulum. Functionally, the dually lipidated sonic hedgehog protein N-product (ShhNp) is a morphogen which is essential for a variety of patterning events during development. Involved in dorso-ventral patterning of the brain and in early patterning of the developing eyes. Binds to the patched (PTCH1) receptor, which functions in association with smoothened (SMO), to activate the transcription of target genes. In the absence of SHH, PTCH1 represses the constitutive signaling activity of SMO. This chain is Sonic hedgehog protein (shha), found in Danio rerio (Zebrafish).